Here is a 264-residue protein sequence, read N- to C-terminus: 3-methyl-2-oxobutanoate hydroxymethyltransferase (264 aa).

Positions 45 and 84 each coordinate Mg(2+). Residues 45 to 46, aspartate 84, and lysine 112 each bind 3-methyl-2-oxobutanoate; that span reads DS. Residue glutamate 114 coordinates Mg(2+). Catalysis depends on glutamate 181, which acts as the Proton acceptor.

It belongs to the PanB family. Homodecamer; pentamer of dimers. Mg(2+) serves as cofactor.

Its subcellular location is the cytoplasm. It carries out the reaction 3-methyl-2-oxobutanoate + (6R)-5,10-methylene-5,6,7,8-tetrahydrofolate + H2O = 2-dehydropantoate + (6S)-5,6,7,8-tetrahydrofolate. The protein operates within cofactor biosynthesis; (R)-pantothenate biosynthesis; (R)-pantoate from 3-methyl-2-oxobutanoate: step 1/2. In terms of biological role, catalyzes the reversible reaction in which hydroxymethyl group from 5,10-methylenetetrahydrofolate is transferred onto alpha-ketoisovalerate to form ketopantoate. This chain is 3-methyl-2-oxobutanoate hydroxymethyltransferase, found in Shewanella oneidensis (strain ATCC 700550 / JCM 31522 / CIP 106686 / LMG 19005 / NCIMB 14063 / MR-1).